Reading from the N-terminus, the 174-residue chain is ATP-dependent protease subunit HslV (174 aa).

Residue Thr2 is part of the active site. Na(+) contacts are provided by Gly157, Cys160, and Thr163.

This sequence belongs to the peptidase T1B family. HslV subfamily. In terms of assembly, a double ring-shaped homohexamer of HslV is capped on each side by a ring-shaped HslU homohexamer. The assembly of the HslU/HslV complex is dependent on binding of ATP.

It is found in the cytoplasm. It catalyses the reaction ATP-dependent cleavage of peptide bonds with broad specificity.. With respect to regulation, allosterically activated by HslU binding. Its function is as follows. Protease subunit of a proteasome-like degradation complex believed to be a general protein degrading machinery. The sequence is that of ATP-dependent protease subunit HslV from Shewanella denitrificans (strain OS217 / ATCC BAA-1090 / DSM 15013).